The chain runs to 89 residues: Small ribosomal subunit protein uS15 (89 aa).

Belongs to the universal ribosomal protein uS15 family. Part of the 30S ribosomal subunit. Forms a bridge to the 50S subunit in the 70S ribosome, contacting the 23S rRNA.

Functionally, one of the primary rRNA binding proteins, it binds directly to 16S rRNA where it helps nucleate assembly of the platform of the 30S subunit by binding and bridging several RNA helices of the 16S rRNA. Its function is as follows. Forms an intersubunit bridge (bridge B4) with the 23S rRNA of the 50S subunit in the ribosome. This Lactiplantibacillus plantarum (strain ATCC BAA-793 / NCIMB 8826 / WCFS1) (Lactobacillus plantarum) protein is Small ribosomal subunit protein uS15.